The sequence spans 1488 residues: Calmodulin binding protein PICBP (1488 aa).

Disordered regions lie at residues 1 to 31 (MSNP…RKMW), 63 to 112 (TAES…SRIS), 280 to 329 (GPLG…GRSS), and 378 to 414 (HDHD…EEDG). Basic residues predominate over residues 18–31 (SSRRVHKRRERKMW). The span at 76-86 (DDSRTYSKSSD) shows a compositional bias: basic and acidic residues. Positions 98-107 (SVKRRAKSKS) are enriched in basic residues. The span at 297-312 (DNVDGDSDEEVFEEEV) shows a compositional bias: acidic residues. Calmodulin-binding regions lie at residues 493–592 (TFHM…SLIP) and 831–938 (NSLK…DIVL). Disordered stretches follow at residues 816 to 844 (IPDS…GETK) and 941 to 971 (HDTP…EGCE). Basic and acidic residues-rich tracts occupy residues 833 to 844 (LKEEKEHQGETK) and 954 to 971 (RNND…EGCE). Residues 1135 to 1229 (EKRVKGWNNV…SLLAQAFDTI (95 aa)) are calmodulin-binding. Disordered regions lie at residues 1232 to 1252 (QDMG…ISRQ) and 1316 to 1340 (EKNQ…DTSV). Residues 1235-1252 (GSGSTPGSAASSRNISRQ) show a composition bias toward low complexity. The span at 1316 to 1328 (EKNQTLPEETRKE) shows a compositional bias: basic and acidic residues. Positions 1379–1483 (RQKSETLQVS…QLLVQAFESL (105 aa)) are calmodulin-binding.

Its function is as follows. Binds calmodulin in a calcium-dependent manner in vitro. May play a role in general plant defense including R gene-mediated responses. The chain is Calmodulin binding protein PICBP from Arabidopsis thaliana (Mouse-ear cress).